The sequence spans 355 residues: Capsular polysaccharide biosynthesis glycosyltransferase CapH (355 aa).

This sequence belongs to the glycosyltransferase group 1 family. Glycosyltransferase 4 subfamily.

The protein operates within capsule biogenesis; capsule polysaccharide biosynthesis. In terms of biological role, required for the biosynthesis of type 1 capsular polysaccharide. This Staphylococcus aureus protein is Capsular polysaccharide biosynthesis glycosyltransferase CapH (capH).